The sequence spans 310 residues: Protein TIFY 6A (310 aa).

Positions 141–176 (SKPLPPQLTIFYAGSVLVYQDIAPEKAQAIMLLAGN) constitute a Tify domain. The Jas motif lies at 259-284 (PQTRKASLARFLEKRKERVINVSPYY). The short motif at 261–268 (TRKASLAR) is the Nuclear localization signal element.

The protein belongs to the TIFY/JAZ family. As to quaternary structure, homo- and heterodimer. Interacts with MYC2, AFPH2/NINJA, TIFY10A/JAZ1, TIFY6B/JAZ3, TIFY5A/JAZ8, TIFY9/JAZ10 and TIFY3A/JAZ11. Interacts with RHD6 and RSL1. Post-translationally, ubiquitinated. Targeted for degradation by the SCF(COI1) E3 ubiquitin ligase-proteasome pathway during jasmonate signaling.

Its subcellular location is the nucleus. In terms of biological role, repressor of jasmonate responses. Interacts with and suppresses RHD6 and RSL1 transcription factor activities to negatively regulate jasmonate-stimulated root hair development. The sequence is that of Protein TIFY 6A (TIFY6A) from Arabidopsis thaliana (Mouse-ear cress).